Consider the following 221-residue polypeptide: Vacuolar protein sorting-associated protein 20 (221 aa).

Residue Gly2 is the site of N-myristoyl glycine attachment. Residues Gln72–Lys178 are a coiled coil. Residues Asn170–Ser221 form a disordered region. Residues Thr197–Glu215 show a composition bias toward basic and acidic residues.

The protein belongs to the SNF7 family. In terms of assembly, core component of the ESCRT-III complex (endosomal sorting required for transport complex III). ESCRT-III appears to be sequentially assembled as a flat lattice on the endosome membrane and forms a transient 450 kDa complex that contains DID4, oligomerized SNF7, VPS20 and VPS24. SNF7 oligomerization into a membrane-associated filament is nucleated by association of SNF7 with VPS20; the process is terminated through association of VPS24, possibly by capping the SNF7 filament. VPS24 subsequently associates with DID4/VPS2. Interacts with the VPS4. Interacts with VPS25; the interaction mediates the association with the ESCRT-II complex.

The protein localises to the endosome membrane. Its subcellular location is the vacuole membrane. Class E VPS protein implicated in concentration and sorting of cargo proteins of the multivesicular body (MVB) for incorporation into intralumenal vesicles. The lumenal sequestrated membrane proteins will be targeted into the vacuole after fusion of the endosome with the vacuole. Acts a component of the ESCRT-III complex, which appears to be critical for late steps in MVB sorting, such as membrane invagination and final cargo sorting and recruitment of late-acting components of the sorting machinery. The MVB pathway requires the sequential function of ESCRT-O, -I,-II and -III complex assemblies. Required for the oligomerization of SNF7 into a membrane-associated filament. The VPS20-SNF7 subcomplex is responsible for the membrane association of the ESCRT-III complex. Also required for the RIM101 repressor proteolytic activation. This is Vacuolar protein sorting-associated protein 20 (VPS20) from Saccharomyces cerevisiae (strain ATCC 204508 / S288c) (Baker's yeast).